The chain runs to 451 residues: Enolase (451 aa).

A (2R)-2-phosphoglycerate-binding site is contributed by Q163. The Proton donor role is filled by E205. Positions 258, 308, and 335 each coordinate Mg(2+). The (2R)-2-phosphoglycerate site is built by K360, R389, S390, and K411. K360 functions as the Proton acceptor in the catalytic mechanism.

This sequence belongs to the enolase family. The cofactor is Mg(2+).

The protein resides in the cytoplasm. It localises to the secreted. Its subcellular location is the cell surface. It carries out the reaction (2R)-2-phosphoglycerate = phosphoenolpyruvate + H2O. It participates in carbohydrate degradation; glycolysis; pyruvate from D-glyceraldehyde 3-phosphate: step 4/5. Functionally, catalyzes the reversible conversion of 2-phosphoglycerate (2-PG) into phosphoenolpyruvate (PEP). It is essential for the degradation of carbohydrates via glycolysis. The sequence is that of Enolase from Mycoplasma capricolum subsp. capricolum (strain California kid / ATCC 27343 / NCTC 10154).